Here is a 160-residue protein sequence, read N- to C-terminus: Cytochrome b6-f complex subunit 4 (160 aa).

A run of 3 helical transmembrane segments spans residues 36 to 56 (ILYM…GLSI), 95 to 115 (LVGV…PFIE), and 127 to 147 (PIAT…GIGA).

Belongs to the cytochrome b family. PetD subfamily. The 4 large subunits of the cytochrome b6-f complex are cytochrome b6, subunit IV (17 kDa polypeptide, petD), cytochrome f and the Rieske protein, while the 4 small subunits are petG, petL, petM and petN. The complex functions as a dimer.

The protein localises to the plastid. Its subcellular location is the chloroplast thylakoid membrane. Component of the cytochrome b6-f complex, which mediates electron transfer between photosystem II (PSII) and photosystem I (PSI), cyclic electron flow around PSI, and state transitions. This is Cytochrome b6-f complex subunit 4 from Gracilaria tenuistipitata var. liui (Red alga).